Reading from the N-terminus, the 756-residue chain is Multicystatin (756 aa).

8 Cystatin domains span residues 3–96, 97–191, 192–285, 286–380, 381–474, 475–568, 569–662, and 663–756; these read IVGG…DDST, MPGG…DDIA, KLGG…DDSA, KTGG…DSAK, IIGG…DDSA, and KPGG…DATK. 8 short sequence motifs (secondary area of contact) span residues 48–52, 142–146, 237–241, 331–335, 426–430, 520–524, 614–618, and 708–712; these read QIVAG, QVVAG, QLVSG, and QLVAG.

The protein belongs to the cystatin family. Phytocystatin subfamily. As to expression, expressed abundantly in tuber and leaf.

Probably has a role in the plant's defense system. This Solanum tuberosum (Potato) protein is Multicystatin.